An 845-amino-acid polypeptide reads, in one-letter code: Alanine--tRNA ligase (845 aa).

Residues H552, H556, C653, and H657 each coordinate Zn(2+).

Belongs to the class-II aminoacyl-tRNA synthetase family. Zn(2+) serves as cofactor.

The protein resides in the cytoplasm. It carries out the reaction tRNA(Ala) + L-alanine + ATP = L-alanyl-tRNA(Ala) + AMP + diphosphate. In terms of biological role, catalyzes the attachment of alanine to tRNA(Ala) in a two-step reaction: alanine is first activated by ATP to form Ala-AMP and then transferred to the acceptor end of tRNA(Ala). Also edits incorrectly charged Ser-tRNA(Ala) and Gly-tRNA(Ala) via its editing domain. The chain is Alanine--tRNA ligase from Campylobacter hominis (strain ATCC BAA-381 / DSM 21671 / CCUG 45161 / LMG 19568 / NCTC 13146 / CH001A).